A 373-amino-acid chain; its full sequence is GTP cyclohydrolase 1 type 2 homolog (373 aa).

Residues His67, His68, Asp106, His333, and Glu336 each coordinate a divalent metal cation.

Belongs to the GTP cyclohydrolase I type 2/NIF3 family. As to quaternary structure, homohexamer.

The chain is GTP cyclohydrolase 1 type 2 homolog from Listeria monocytogenes serovar 1/2a (strain ATCC BAA-679 / EGD-e).